A 373-amino-acid polypeptide reads, in one-letter code: Anhydro-N-acetylmuramic acid kinase (373 aa).

13–20 (GTSMDGID) provides a ligand contact to ATP.

This sequence belongs to the anhydro-N-acetylmuramic acid kinase family.

The catalysed reaction is 1,6-anhydro-N-acetyl-beta-muramate + ATP + H2O = N-acetyl-D-muramate 6-phosphate + ADP + H(+). The protein operates within amino-sugar metabolism; 1,6-anhydro-N-acetylmuramate degradation. It participates in cell wall biogenesis; peptidoglycan recycling. Catalyzes the specific phosphorylation of 1,6-anhydro-N-acetylmuramic acid (anhMurNAc) with the simultaneous cleavage of the 1,6-anhydro ring, generating MurNAc-6-P. Is required for the utilization of anhMurNAc either imported from the medium or derived from its own cell wall murein, and thus plays a role in cell wall recycling. This Agrobacterium fabrum (strain C58 / ATCC 33970) (Agrobacterium tumefaciens (strain C58)) protein is Anhydro-N-acetylmuramic acid kinase.